Consider the following 531-residue polypeptide: Polyamine transporter PUT1 (531 aa).

Residues 1-76 (MADTGGRPEV…LPDGDAGGPM (76 aa)) are disordered. Positions 17–33 (SPGHPAASTTAAAAADL) are enriched in low complexity. Residues 34 to 44 (GHADTGQEKPT) are compositionally biased toward basic and acidic residues. 12 consecutive transmembrane segments (helical) span residues 83-103 (VSMI…PFGI), 113-133 (LLAI…EALI), 147-167 (YVVW…GWMK), 193-213 (LGGG…LTLL), 224-244 (VAIC…LIAL), 262-284 (WNLY…TLAG), 296-316 (ALFY…LAGT), 341-361 (AWLM…MFVA), 391-411 (TPLA…MMSF), 414-434 (IVAA…VAFI), 453-473 (TAGC…VLAL), and 476-496 (LKVA…QPAL).

It belongs to the amino acid-polyamine-organocation (APC) superfamily. Polyamine:cation symporter (PHS) (TC 2.A.3.12) family. In terms of tissue distribution, expressed in seedling roots, leaves, stems, flowers and siliques.

Its subcellular location is the cell membrane. Cell membrane polyamine/proton symporter involved in the polyamine uptake in cells. Possesses high affinity for spermidine and lower affinity for spermine and putrescine. Transports paraquat, a polyamine analog, and thus confers sensitivity to this chemical which is used as a herbicide. This Oryza sativa subsp. japonica (Rice) protein is Polyamine transporter PUT1 (PUT1).